The chain runs to 340 residues: Coproporphyrin III ferrochelatase (340 aa).

2 residues coordinate Fe-coproporphyrin III: serine 52 and tyrosine 116. Residues histidine 172 and glutamate 255 each contribute to the Fe(2+) site.

Belongs to the ferrochelatase family.

The protein localises to the cytoplasm. The enzyme catalyses Fe-coproporphyrin III + 2 H(+) = coproporphyrin III + Fe(2+). It participates in porphyrin-containing compound metabolism; protoheme biosynthesis. Functionally, involved in coproporphyrin-dependent heme b biosynthesis. Catalyzes the insertion of ferrous iron into coproporphyrin III to form Fe-coproporphyrin III. This Mycobacterium ulcerans (strain Agy99) protein is Coproporphyrin III ferrochelatase.